The primary structure comprises 57 residues: Large ribosomal subunit protein bL32B (57 aa).

The protein belongs to the bacterial ribosomal protein bL32 family.

The polypeptide is Large ribosomal subunit protein bL32B (rpmF2) (Listeria innocua serovar 6a (strain ATCC BAA-680 / CLIP 11262)).